A 327-amino-acid polypeptide reads, in one-letter code: UPF0665 family protein C23C4.06c (327 aa).

The protein belongs to the UPF0665 family.

The protein localises to the cytoplasm. Its subcellular location is the nucleus. In Schizosaccharomyces pombe (strain 972 / ATCC 24843) (Fission yeast), this protein is UPF0665 family protein C23C4.06c.